Reading from the N-terminus, the 864-residue chain is Protein sey1 (864 aa).

Over 1–747 (MATNGHFATI…KRSAIGGMTQ (747 aa)) the chain is Cytoplasmic. The region spanning 49–305 (GFNYHLISVF…IPADGFSRYA (257 aa)) is the GB1/RHD3-type G domain. Residue 59 to 66 (GSQSTGKS) coordinates GTP. Residues 480–506 (SDYKQELALYEKELADVSGRLRREEMR) adopt a coiled-coil conformation. Residues 675-701 (DRWIGHTPSSATPADEEDLPPIGGVDE) are disordered. Positions 688–701 (ADEEDLPPIGGVDE) are enriched in acidic residues. The helical transmembrane segment at 748-768 (VPLYFYGLLLALGWNEIIAVL) threads the bilayer. The Lumenal segment spans residues 769–771 (RNP). Residues 772–792 (AYFFLLFVCAVGAYVTYQLNL) traverse the membrane as a helical segment. The Cytoplasmic portion of the chain corresponds to 793 to 864 (WGPIIKMTEA…TSADEDMDDL (72 aa)). Residues 830–864 (AMSAGSGRSGEQYELSDLSKKGKARTSADEDMDDL) are disordered.

It belongs to the TRAFAC class dynamin-like GTPase superfamily. GB1/RHD3 GTPase family. RHD3 subfamily.

The protein resides in the endoplasmic reticulum membrane. Cooperates with the reticulon proteins and tubule-shaping DP1 family proteins to generate and maintain the structure of the tubular endoplasmic reticulum network. Has GTPase activity, which is required for its function in ER organization. The polypeptide is Protein sey1 (sey1) (Neosartorya fischeri (strain ATCC 1020 / DSM 3700 / CBS 544.65 / FGSC A1164 / JCM 1740 / NRRL 181 / WB 181) (Aspergillus fischerianus)).